Here is a 358-residue protein sequence, read N- to C-terminus: Methylthioribose-1-phosphate isomerase (358 aa).

Substrate contacts are provided by residues Arg-54–Ala-56, Arg-96, and Gln-205. Asp-246 serves as the catalytic Proton donor. A substrate-binding site is contributed by Asn-256–Lys-257.

The protein belongs to the eIF-2B alpha/beta/delta subunits family. MtnA subfamily.

The catalysed reaction is 5-(methylsulfanyl)-alpha-D-ribose 1-phosphate = 5-(methylsulfanyl)-D-ribulose 1-phosphate. Its pathway is amino-acid biosynthesis; L-methionine biosynthesis via salvage pathway; L-methionine from S-methyl-5-thio-alpha-D-ribose 1-phosphate: step 1/6. In terms of biological role, catalyzes the interconversion of methylthioribose-1-phosphate (MTR-1-P) into methylthioribulose-1-phosphate (MTRu-1-P). The sequence is that of Methylthioribose-1-phosphate isomerase from Azotobacter vinelandii (strain DJ / ATCC BAA-1303).